Consider the following 175-residue polypeptide: MDKLTDLNYTLNVITLINSTLHTILEDPGMAYFPYIASVLTVLFTLHKASIPTMKIALKTSKCSYKVVKYCIVTIFNTLLKLAGYKEQITTKDEIEKQMDRVIKEMRRHLEMIDKLTTREIEQVELLKRIYDKLMIRATDEIDMSKEINQKNVRTLEEWENGKNPYESKEVTAAM.

Residues 1–28 (MDKLTDLNYTLNVITLINSTLHTILEDP) lie on the Lumenal side of the membrane. N-linked (GlcNAc...) asparagine; by host glycosylation is found at Asn-8 and Asn-18. Residues 29-51 (GMAYFPYIASVLTVLFTLHKASI) form a helical; Signal-anchor for type III membrane protein membrane-spanning segment. Over 52 to 175 (PTMKIALKTS…YESKEVTAAM (124 aa)) the chain is Cytoplasmic. Ca(2+) is bound by residues Glu-120 and Gln-123.

This sequence belongs to the rotavirus NSP4 family. As to quaternary structure, homotetramer. Interacts with the immature particle in the viroplasm. Interacts with host CAV1, early and late in infection. Interacts with host integrin ITGA1/ITGB1 heterodimer. Interacts with host integrin ITGA2/ITGB1 heterodimer. Interaction with microtubules blocks trafficking to the Golgi apparatus. Post-translationally, the N-glycosyl content is primarily Man(9)GlcNAc, with a small amount of Man(8)GlcNAc.

The protein resides in the host rough endoplasmic reticulum membrane. It is found in the host membrane. It localises to the host caveola. The protein localises to the secreted. Its function is as follows. Plays an essential role in the virus replication cycle by acting as a viroporin. Creates a pore in the host endoplasmic reticulum and as a consequence releases Ca(2+) in the cytoplasm of infected cell. In turn, high levels of cytoplasmic calcium trigger membrane trafficking and transport of viral ER-associated proteins to viroplasms, sites of viral genome replication and immature particle assembly. In terms of biological role, the secreted form acts as an enterotoxin that causes phospholipase C-dependent elevation of the intracellular calcium concentration in host intestinal mucosa cells. Increased concentration of intracellular calcium disrupts the cytoskeleton and the tight junctions, raising the paracellular permeability. Potentiates chloride ion secretion through a calcium ion-dependent signaling pathway, inducing age-dependent diarrhea. To perform this enterotoxigenic role in vivo, NSP4 is released from infected enterocytes in a soluble form capable of diffusing within the intestinal lumen and interacting with host plasma membrane receptors on neighboring epithelial cells such as integrins ITGA1/ITGB1 and ITGA2/ITGB1. This is Non-structural glycoprotein 4 from Equus caballus (Horse).